The primary structure comprises 185 residues: Peptidyl-tRNA hydrolase (185 aa).

Residue Y14 coordinates tRNA. The Proton acceptor role is filled by H19. 3 residues coordinate tRNA: Y65, N67, and N113.

The protein belongs to the PTH family. As to quaternary structure, monomer.

The protein resides in the cytoplasm. It carries out the reaction an N-acyl-L-alpha-aminoacyl-tRNA + H2O = an N-acyl-L-amino acid + a tRNA + H(+). Functionally, hydrolyzes ribosome-free peptidyl-tRNAs (with 1 or more amino acids incorporated), which drop off the ribosome during protein synthesis, or as a result of ribosome stalling. Catalyzes the release of premature peptidyl moieties from peptidyl-tRNA molecules trapped in stalled 50S ribosomal subunits, and thus maintains levels of free tRNAs and 50S ribosomes. This is Peptidyl-tRNA hydrolase from Rickettsia rickettsii (strain Iowa).